The chain runs to 153 residues: uncharacterized protein (153 aa).

An N-terminal signal peptide occupies residues 1–21 (MKITITSLLFFLVMIVELASA).

This is an uncharacterized protein from Saccharomyces cerevisiae (strain ATCC 204508 / S288c) (Baker's yeast).